Consider the following 219-residue polypeptide: ATP-dependent Clp protease proteolytic subunit 1, mitochondrial (219 aa).

The transit peptide at 1–23 directs the protein to the mitochondrion; it reads MLRRILTTSSVRNLTSSTQARVG. S118 acts as the Nucleophile in catalysis. H143 is an active-site residue.

Belongs to the peptidase S14 family. Tetradecamer that assembles into a two heptameric rings with a central cavity.

The protein resides in the mitochondrion matrix. The catalysed reaction is Hydrolysis of proteins to small peptides in the presence of ATP and magnesium. alpha-casein is the usual test substrate. In the absence of ATP, only oligopeptides shorter than five residues are hydrolyzed (such as succinyl-Leu-Tyr-|-NHMec, and Leu-Tyr-Leu-|-Tyr-Trp, in which cleavage of the -Tyr-|-Leu- and -Tyr-|-Trp bonds also occurs).. In terms of biological role, clp cleaves peptides in various proteins in a process that requires ATP hydrolysis. Clp may be responsible for a fairly general and central housekeeping function rather than for the degradation of specific substrates. The sequence is that of ATP-dependent Clp protease proteolytic subunit 1, mitochondrial from Caenorhabditis briggsae.